We begin with the raw amino-acid sequence, 363 residues long: 3-dehydroquinate synthase (363 aa).

NAD(+) is bound by residues 71–76 (DGEQYK), 105–109 (GVIGD), 129–130 (TT), lysine 142, lysine 151, and 169–172 (CLKT). Glutamate 184, histidine 247, and histidine 264 together coordinate Zn(2+).

This sequence belongs to the sugar phosphate cyclases superfamily. Dehydroquinate synthase family. It depends on NAD(+) as a cofactor. The cofactor is Co(2+). Zn(2+) serves as cofactor.

It is found in the cytoplasm. It catalyses the reaction 7-phospho-2-dehydro-3-deoxy-D-arabino-heptonate = 3-dehydroquinate + phosphate. Its pathway is metabolic intermediate biosynthesis; chorismate biosynthesis; chorismate from D-erythrose 4-phosphate and phosphoenolpyruvate: step 2/7. Catalyzes the conversion of 3-deoxy-D-arabino-heptulosonate 7-phosphate (DAHP) to dehydroquinate (DHQ). The protein is 3-dehydroquinate synthase of Vibrio vulnificus (strain CMCP6).